The sequence spans 301 residues: Fatty acid elongase 3 (301 aa).

7 consecutive transmembrane segments (helical) span residues 31-51, 64-84, 122-142, 161-181, 187-207, 219-239, and 257-277; these read VPYI…KSIM, IVWN…TVPY, ALAD…LFAL, VIFL…FAYV, GLWF…YYFV, FAPI…IVVC, and FSLH…SQLF. Positions 165–169 match the HxxHH motif motif; that stretch reads HWYHH. Catalysis depends on His168, which acts as the Nucleophile.

The protein belongs to the ELO family.

It is found in the endoplasmic reticulum membrane. It carries out the reaction an acyl-CoA + malonyl-CoA + H(+) = a 3-oxoacyl-CoA + CO2 + CoA. Its pathway is lipid metabolism; fatty acid biosynthesis. Involved in the synthesis of fatty acids. Elongates C14 fatty acids to C18. This Trypanosoma brucei brucei (strain 927/4 GUTat10.1) protein is Fatty acid elongase 3.